A 456-amino-acid polypeptide reads, in one-letter code: Exodeoxyribonuclease 7 large subunit (456 aa).

This sequence belongs to the XseA family. Heterooligomer composed of large and small subunits.

It is found in the cytoplasm. The catalysed reaction is Exonucleolytic cleavage in either 5'- to 3'- or 3'- to 5'-direction to yield nucleoside 5'-phosphates.. Bidirectionally degrades single-stranded DNA into large acid-insoluble oligonucleotides, which are then degraded further into small acid-soluble oligonucleotides. In Lactobacillus delbrueckii subsp. bulgaricus (strain ATCC 11842 / DSM 20081 / BCRC 10696 / JCM 1002 / NBRC 13953 / NCIMB 11778 / NCTC 12712 / WDCM 00102 / Lb 14), this protein is Exodeoxyribonuclease 7 large subunit.